Here is a 416-residue protein sequence, read N- to C-terminus: ATP-dependent Clp protease ATP-binding subunit ClpX (416 aa).

Residues 1–54 (MFKFGDEKGQLKCSFCGKSQEQVRKLVAGPGVYICDECIELCNEIIEEELNDDV) form the ClpX-type ZB domain. Residues Cys13, Cys16, Cys35, and Cys38 each contribute to the Zn(2+) site. ATP is bound at residue 117–124 (PTGCGKTL).

The protein belongs to the ClpX chaperone family. As to quaternary structure, component of the ClpX-ClpP complex. Forms a hexameric ring that, in the presence of ATP, binds to fourteen ClpP subunits assembled into a disk-like structure with a central cavity, resembling the structure of eukaryotic proteasomes.

Functionally, ATP-dependent specificity component of the Clp protease. It directs the protease to specific substrates. Can perform chaperone functions in the absence of ClpP. The sequence is that of ATP-dependent Clp protease ATP-binding subunit ClpX from Halothermothrix orenii (strain H 168 / OCM 544 / DSM 9562).